Consider the following 272-residue polypeptide: 3-methyl-2-oxobutanoate hydroxymethyltransferase (272 aa).

Residues Asp52 and Asp91 each contribute to the Mg(2+) site. 3-methyl-2-oxobutanoate is bound by residues 52–53 (DS), Asp91, and Lys121. Glu123 provides a ligand contact to Mg(2+). The Proton acceptor role is filled by Glu190.

The protein belongs to the PanB family. In terms of assembly, homodecamer; pentamer of dimers. It depends on Mg(2+) as a cofactor.

The protein resides in the cytoplasm. It carries out the reaction 3-methyl-2-oxobutanoate + (6R)-5,10-methylene-5,6,7,8-tetrahydrofolate + H2O = 2-dehydropantoate + (6S)-5,6,7,8-tetrahydrofolate. Its pathway is cofactor biosynthesis; (R)-pantothenate biosynthesis; (R)-pantoate from 3-methyl-2-oxobutanoate: step 1/2. Its function is as follows. Catalyzes the reversible reaction in which hydroxymethyl group from 5,10-methylenetetrahydrofolate is transferred onto alpha-ketoisovalerate to form ketopantoate. This Cytophaga hutchinsonii (strain ATCC 33406 / DSM 1761 / CIP 103989 / NBRC 15051 / NCIMB 9469 / D465) protein is 3-methyl-2-oxobutanoate hydroxymethyltransferase.